The following is an 80-amino-acid chain: Defensin-like protein 1 (80 aa).

The N-terminal stretch at 1–29 is a signal peptide; it reads MAKFASIIALLFAALVLFAAFEAPTMVEA. Gln30 carries the pyrrolidone carboxylic acid modification. 4 disulfide bridges follow: Cys33-Cys80, Cys44-Cys65, Cys50-Cys74, and Cys54-Cys76.

Belongs to the DEFL family. In terms of assembly, forms oligomers in its native state.

It localises to the secreted. In terms of biological role, possesses antifungal activity sensitive to inorganic cations. The protein is Defensin-like protein 1 (AFP1) of Raphanus sativus (Radish).